We begin with the raw amino-acid sequence, 617 residues long: ATP-dependent RNA helicase DBP1 (617 aa).

The segment at 1 to 90 (MADLPQKVSN…TSANYNRGGS (90 aa)) is disordered. Positions 7–17 (KVSNLSINNKE) are enriched in polar residues. Basic and acidic residues predominate over residues 38–58 (PSFERSTPKQEDKVTGGDFFR). Positions 79 to 90 (GGTSANYNRGGS) are enriched in polar residues. Residues 154 to 182 (LDFSSPPLDELLMENIKLASFTKPTPVQK) carry the Q motif motif. The 190-residue stretch at 185-374 (IPIVTKGRDL…RDFLDNYIFL (190 aa)) folds into the Helicase ATP-binding domain. 198-205 (AQTGSGKT) serves as a coordination point for ATP. The DEAD box motif lies at 318 to 321 (DEAD). Residues 385–545 (NITQRILYVD…EVPTFLSDLS (161 aa)) enclose the Helicase C-terminal domain. A disordered region spans residues 542–617 (SDLSRQNSRG…GYGNSNASWW (76 aa)). The span at 580–594 (FGSTRPRNTGTSNWG) shows a compositional bias: polar residues.

This sequence belongs to the DEAD box helicase family. DDX3/DED1 subfamily.

It is found in the cytoplasm. It catalyses the reaction ATP + H2O = ADP + phosphate + H(+). In terms of biological role, ATP-binding RNA helicase involved in translation initiation. Remodels RNA in response to ADP and ATP concentrations by facilitating disruption, but also formation of RNA duplexes. Redundant to DED1, may be required in conditions in which DED1 expression is decreased. The sequence is that of ATP-dependent RNA helicase DBP1 (DBP1) from Saccharomyces cerevisiae (strain ATCC 204508 / S288c) (Baker's yeast).